Consider the following 1201-residue polypeptide: Transcription-repair-coupling factor (1201 aa).

Positions 1–27 (MRLLITLGPSGSTHGHSLHTDAGRRRG) are disordered. Residues 670–831 (DMQKPEPMDR…MSGVRDMSII (162 aa)) form the Helicase ATP-binding domain. 683 to 690 (GDVGYGKT) contacts ATP. Residues 784-787 (DEEQ) carry the DEEQ box motif. Residues 852–1006 (VVKEAIEREV…GFSIASHDLE (155 aa)) enclose the Helicase C-terminal domain.

This sequence in the N-terminal section; belongs to the UvrB family. The protein in the C-terminal section; belongs to the helicase family. RecG subfamily.

It is found in the cytoplasm. Functionally, couples transcription and DNA repair by recognizing RNA polymerase (RNAP) stalled at DNA lesions. Mediates ATP-dependent release of RNAP and its truncated transcript from the DNA, and recruitment of nucleotide excision repair machinery to the damaged site. The polypeptide is Transcription-repair-coupling factor (Myxococcus xanthus).